A 353-amino-acid polypeptide reads, in one-letter code: MVLVATLFSLFTVSLCRSIPRSSPSSSPYTQATDLKIHDPTVINANGAYYAYGVGEHIVIHQAPGLAGPWKQIGSVLDKDSIIPKGDRAKPWAPTTIEVKGTFYCYYSVSNAGCRDSAIGVATSQSPGPGGWTDHGAIVQSGTGQGSDEHPFNEVNAIDPAVLVTGDKGHLVFGSYWSGIWQVPLNEDFSSVGNTTGLNAHHLAKHPKTERVNSQDQNPDPLCRDSSGRRPVEGAYISYHAPYYYLWLSWGQCCDYDPNNLPPSGEEYSIRVGRSESPHGPFVDKQGKELTQGGGELIYGSNNDVYAPGGQGVITVETGDILYYHYSLYRYSTHSLYTFANLDFNQGCTLFIQ.

A signal peptide spans 1–16 (MVLVATLFSLFTVSLC). Asp39 acts as the Proton acceptor in catalysis. Asn194 carries an N-linked (GlcNAc...) asparagine glycan. The tract at residues 202–227 (HLAKHPKTERVNSQDQNPDPLCRDSS) is disordered. The active-site Proton donor is the Glu233.

Belongs to the glycosyl hydrolase 43 family.

The protein resides in the secreted. The enzyme catalyses Endohydrolysis of (1-&gt;5)-alpha-arabinofuranosidic linkages in (1-&gt;5)-arabinans.. The protein operates within glycan metabolism; L-arabinan degradation. Its function is as follows. Endo-1,5-alpha-L-arabinanase involved in degradation of pectin. Its preferred substrate is linear 1,5-alpha-L-arabinan. This Aspergillus oryzae (strain ATCC 42149 / RIB 40) (Yellow koji mold) protein is Probable arabinan endo-1,5-alpha-L-arabinosidase B (abnB).